Reading from the N-terminus, the 539-residue chain is Hydroxylamine reductase (539 aa).

Positions 3, 6, 15, and 21 each coordinate [4Fe-4S] cluster. Hybrid [4Fe-2O-2S] cluster-binding residues include H235, E259, C303, C394, C422, C447, E482, and K484. At C394 the chain carries Cysteine persulfide.

This sequence belongs to the HCP family. [4Fe-4S] cluster serves as cofactor. Requires hybrid [4Fe-2O-2S] cluster as cofactor.

The protein localises to the cytoplasm. The enzyme catalyses A + NH4(+) + H2O = hydroxylamine + AH2 + H(+). Its function is as follows. Catalyzes the reduction of hydroxylamine to form NH(3) and H(2)O. This is Hydroxylamine reductase from Methanocaldococcus jannaschii (strain ATCC 43067 / DSM 2661 / JAL-1 / JCM 10045 / NBRC 100440) (Methanococcus jannaschii).